We begin with the raw amino-acid sequence, 704 residues long: Polyribonucleotide nucleotidyltransferase (704 aa).

Aspartate 491 and aspartate 497 together coordinate Mg(2+). The region spanning 558-617 (PNYAVIEINSDKIRDVIGKGGATIRQLTEDTGAVIDIDDNGTIRIFGENKAATKEAIRQI) is the KH domain. An S1 motif domain is found at 627–695 (GKVYKGTVAR…NRGRIKLTMK (69 aa)).

It belongs to the polyribonucleotide nucleotidyltransferase family. Component of the RNA degradosome, which is a multiprotein complex involved in RNA processing and mRNA degradation. It depends on Mg(2+) as a cofactor.

The protein localises to the cytoplasm. It carries out the reaction RNA(n+1) + phosphate = RNA(n) + a ribonucleoside 5'-diphosphate. Functionally, involved in mRNA degradation. Catalyzes the phosphorolysis of single-stranded polyribonucleotides processively in the 3'- to 5'-direction. This Psychrobacter sp. (strain PRwf-1) protein is Polyribonucleotide nucleotidyltransferase.